We begin with the raw amino-acid sequence, 295 residues long: MGFSFLLATVQKERMKRRSRTRSRSRRRAKQDPKTWVARYIPQDLLIEILTRLPPKSVMRFKCVSKFWSSLLSSRYFCNRFLIVPSQPQPSLYMCLLDRYNYSKSLILSSAPSTSPYSFVFDQDLTIRKMGGFFLRILRGFIFFTRNLKARIYNPTTRQLVILPTIKESDIIAGPPYNILYFICHDPVNDRYKLLCTVSYASDNDLQNLKSELWIFVLEAGGSWKRVANEFPHHVPSHLDLNMNGVLYFLAWTDPHTCMLVSFDVRSEEFNTMQVPRNAGDTLPRQEKGVVNRVW.

Residues 35–80 form the F-box domain; it reads TWVARYIPQDLLIEILTRLPPKSVMRFKCVSKFWSSLLSSRYFCNR.

This Arabidopsis thaliana (Mouse-ear cress) protein is F-box only protein 8 (FBX8).